We begin with the raw amino-acid sequence, 170 residues long: Large ribosomal subunit protein uL11 (170 aa).

Belongs to the universal ribosomal protein uL11 family. In terms of assembly, part of the ribosomal stalk of the 50S ribosomal subunit. Interacts with L10 and the large rRNA to form the base of the stalk. L10 forms an elongated spine to which L12 dimers bind in a sequential fashion forming a multimeric L10(L12)X complex.

Functionally, forms part of the ribosomal stalk which helps the ribosome interact with GTP-bound translation factors. The polypeptide is Large ribosomal subunit protein uL11 (Sulfolobus acidocaldarius (strain ATCC 33909 / DSM 639 / JCM 8929 / NBRC 15157 / NCIMB 11770)).